The chain runs to 283 residues: F-box only protein 27 (283 aa).

Residues 1-23 (MGASVSRGRAARVPAPEPEPEEA) form a disordered region. Residues 23 to 70 (ALDLSQLPPELLLVVLSHVPPRTLLGRCRQVCRGWRALVDGQALWLLI) form the F-box domain. The 177-residue stretch at 104 to 280 (FCARRPIGRN…VTNSSVIVRV (177 aa)) folds into the FBA domain.

In terms of assembly, part of a SCF (SKP1-cullin-F-box) protein ligase complex. Interacts with SKP1 and CUL1. As to expression, predominantly expressed in brain, heart and kidney. Expressed at lower levels in liver and lung.

Substrate-recognition component of the SCF (SKP1-CUL1-F-box protein)-type E3 ubiquitin ligase complex. Able to recognize and bind denatured glycoproteins, which are modified with complex-type oligosaccharides. This chain is F-box only protein 27 (FBXO27), found in Homo sapiens (Human).